The following is a 391-amino-acid chain: Autophagy-related protein 18d (391 aa).

A disordered region spans residues M1–G24. 4 WD repeats span residues S31–R69, D74–E118, A203–E243, and V248–D287.

Belongs to the WD repeat PROPPIN family. Component of the PI(3,5)P2 regulatory complex at least composed of ATG18, SAC/FIG4, FAB1 and VAC14. As to expression, expressed in roots, stems, flowers and leaves.

The protein localises to the preautophagosomal structure membrane. It localises to the vacuole membrane. Its function is as follows. The PI(3,5)P2 regulatory complex regulates both the synthesis and turnover of phosphatidylinositol 3,5-bisphosphate (PtdIns(3,5)P2). Required for autophagy. This is Autophagy-related protein 18d (ATG18D) from Arabidopsis thaliana (Mouse-ear cress).